Reading from the N-terminus, the 547-residue chain is Germacrene A synthase (547 aa).

Positions 300, 304, 443, and 451 each coordinate Mg(2+). The DDXXD motif signature appears at Asp-300–Asp-304.

It belongs to the terpene synthase family. Tpsa subfamily. Mg(2+) is required as a cofactor. The cofactor is Mn(2+). In terms of tissue distribution, expressed in leaves.

It localises to the plastid. It is found in the chloroplast. The catalysed reaction is (2E,6E)-farnesyl diphosphate = germacrene A + diphosphate. It carries out the reaction (2E,6E)-farnesyl diphosphate = (1S,2S,4R)-beta-elemene + diphosphate. The protein operates within secondary metabolite biosynthesis; terpenoid biosynthesis. Sesquiterpene synthase involved in the biosynthesis of volatile compounds widely used in aromatherapy and folk medicine, and present in culinary herbs. Mediates the conversion of (2E,6E)-farnesyl diphosphate (FPP) into germacrene A and beta-elemene. Not able to use (2E)-geranyl diphosphate (GPP) as substrate. The polypeptide is Germacrene A synthase (Lavandula pedunculata subsp. lusitanica (French lavender)).